An 88-amino-acid polypeptide reads, in one-letter code: Probable small nuclear ribonucleoprotein F (88 aa).

Residues 7 to 79 (NPKPFLNNLT…VLYVRGVPED (73 aa)) form the Sm domain.

Belongs to the snRNP Sm proteins family. SmF/LSm6 subfamily.

The protein resides in the nucleus. Functionally, probable common Sm protein, is found in U1 and U2 snRNPs and may be part of the spliceosome. This chain is Probable small nuclear ribonucleoprotein F, found in Arabidopsis thaliana (Mouse-ear cress).